Consider the following 353-residue polypeptide: MRFTIIIPTCNNEATIRQLLISIESKEHYRILCIDGGSTDQTIPMIERLQRELKHISLIQLQNASIATCINKGLMDIKMTDPHDSDAFMVIKPTSIVLPGKLDRLTAAFKNNDNIDMVIGQRAYNYHGEWKLKSADEFIKDNRIVTLTEQPDLLSMMSFDGKLFSAKFAELQCDETLANTYNHAILVKAMQKATDIHLVSQMIVGDNDIDTHATSNDEDFNRYITEIMKIRQRVMEMLLLPEQRLLYSDMVDRILFNNSLKYYMNEHPAVTHTTIQLVKDYIMSMQHSDYVSQNMFDIINTVEFIGENWDREIYELWRQTLIQVGINRPTYKKFLIQLKGRKFAHRTKSMLKR.

This sequence belongs to the glycosyltransferase 2 family.

The chain is Putative glycosyltransferase TagX (tagX) from Staphylococcus aureus (strain COL).